The sequence spans 573 residues: Phosphoenolpyruvate-protein phosphotransferase (573 aa).

The active-site Tele-phosphohistidine intermediate is H190. Phosphoenolpyruvate contacts are provided by R297 and R332. Positions 431 and 455 each coordinate Mg(2+). Residues 454-455 (ND) and R465 each bind phosphoenolpyruvate. Catalysis depends on C502, which acts as the Proton donor.

Belongs to the PEP-utilizing enzyme family. Homodimer. It depends on Mg(2+) as a cofactor.

The protein resides in the cytoplasm. The catalysed reaction is L-histidyl-[protein] + phosphoenolpyruvate = N(pros)-phospho-L-histidyl-[protein] + pyruvate. Its activity is regulated as follows. Irreversibly inhibited the sulfhydryl reagent N-ethylmaleimide (NEM). Functionally, general (non sugar-specific) component of the phosphoenolpyruvate-dependent sugar phosphotransferase system (sugar PTS). This major carbohydrate active-transport system catalyzes the phosphorylation of incoming sugar substrates concomitantly with their translocation across the cell membrane. Enzyme I transfers the phosphoryl group from phosphoenolpyruvate (PEP) to the phosphoryl carrier protein (HPr). In Mycoplasma capricolum subsp. capricolum (strain California kid / ATCC 27343 / NCTC 10154), this protein is Phosphoenolpyruvate-protein phosphotransferase (ptsI).